Consider the following 216-residue polypeptide: Pyridoxine/pyridoxamine 5'-phosphate oxidase 1 (216 aa).

Substrate-binding positions include 10–13 (RREY) and Lys-68. FMN is bound by residues 63–68 (RIVLLK), 78–79 (YT), Lys-85, and Gln-107. Residues Tyr-125, Arg-129, and Ser-133 each coordinate substrate. FMN is bound by residues 142–143 (QS) and Trp-186. Residue 192–194 (RLH) coordinates substrate. Arg-196 serves as a coordination point for FMN.

It belongs to the pyridoxamine 5'-phosphate oxidase family. Homodimer. It depends on FMN as a cofactor.

It carries out the reaction pyridoxamine 5'-phosphate + O2 + H2O = pyridoxal 5'-phosphate + H2O2 + NH4(+). The enzyme catalyses pyridoxine 5'-phosphate + O2 = pyridoxal 5'-phosphate + H2O2. The protein operates within cofactor metabolism; pyridoxal 5'-phosphate salvage; pyridoxal 5'-phosphate from pyridoxamine 5'-phosphate: step 1/1. It functions in the pathway cofactor metabolism; pyridoxal 5'-phosphate salvage; pyridoxal 5'-phosphate from pyridoxine 5'-phosphate: step 1/1. Functionally, catalyzes the oxidation of either pyridoxine 5'-phosphate (PNP) or pyridoxamine 5'-phosphate (PMP) into pyridoxal 5'-phosphate (PLP). This chain is Pyridoxine/pyridoxamine 5'-phosphate oxidase 1, found in Hydrogenovibrio crunogenus (strain DSM 25203 / XCL-2) (Thiomicrospira crunogena).